Reading from the N-terminus, the 159-residue chain is uncharacterized protein (159 aa).

2 disordered regions span residues 1–23 and 91–110; these read MEQD…KGQA and AGGG…GPAA.

This is an uncharacterized protein from Homo sapiens (Human).